The sequence spans 393 residues: 1-deoxy-D-xylulose 5-phosphate reductoisomerase (393 aa).

NADPH is bound by residues threonine 10, glycine 11, serine 12, isoleucine 13, arginine 37, glutamine 38, and asparagine 124. Lysine 125 lines the 1-deoxy-D-xylulose 5-phosphate pocket. Glutamate 126 is an NADPH binding site. Position 150 (aspartate 150) interacts with Mn(2+). 4 residues coordinate 1-deoxy-D-xylulose 5-phosphate: serine 151, glutamate 152, serine 179, and histidine 202. Residue glutamate 152 coordinates Mn(2+). Glycine 208 serves as a coordination point for NADPH. Residues serine 215, asparagine 220, lysine 221, and glutamate 224 each coordinate 1-deoxy-D-xylulose 5-phosphate. Glutamate 224 is a Mn(2+) binding site.

This sequence belongs to the DXR family. The cofactor is Mg(2+). Requires Mn(2+) as cofactor.

The enzyme catalyses 2-C-methyl-D-erythritol 4-phosphate + NADP(+) = 1-deoxy-D-xylulose 5-phosphate + NADPH + H(+). Its pathway is isoprenoid biosynthesis; isopentenyl diphosphate biosynthesis via DXP pathway; isopentenyl diphosphate from 1-deoxy-D-xylulose 5-phosphate: step 1/6. Functionally, catalyzes the NADPH-dependent rearrangement and reduction of 1-deoxy-D-xylulose-5-phosphate (DXP) to 2-C-methyl-D-erythritol 4-phosphate (MEP). The polypeptide is 1-deoxy-D-xylulose 5-phosphate reductoisomerase (Cupriavidus necator (strain ATCC 17699 / DSM 428 / KCTC 22496 / NCIMB 10442 / H16 / Stanier 337) (Ralstonia eutropha)).